The chain runs to 236 residues: MNHTLRSITLVLACVASLSANADPKTPGTHKGYSTIDMTTAGMPADVKMISVADIQKELQGKAPFAVGFDIDDTTLFSTPVFYRGQQEFSPNGYSYLTNQDFWDKANCGWDAFSMPKNIAKELIAMHQERGDSIYFITGRTGSDCNFTTEYLKKTFDIKDMHDVIFAGSSRTEYTKTKYIKNNDIKIYYGDADGDIISARDAGAEGIRVMRAANSSYTPIPKNGIYGERVLKDSQY.

The signal sequence occupies residues 1 to 22 (MNHTLRSITLVLACVASLSANA). Asp-70 functions as the Nucleophile in the catalytic mechanism. Residues Asp-70 and Asp-72 each contribute to the Mg(2+) site. Asp-72 (proton donor) is an active-site residue. Substrate contacts are provided by residues 138–139 (TG) and Lys-176. Asp-191 is a Mg(2+) binding site.

Belongs to the class B bacterial acid phosphatase family. In terms of assembly, homotetramer. Mg(2+) serves as cofactor.

Its subcellular location is the periplasm. It carries out the reaction a phosphate monoester + H2O = an alcohol + phosphate. In terms of biological role, dephosphorylates several organic phosphate monoesters. Also has a phosphotransferase activity catalyzing the transfer of low-energy phosphate groups from organic phosphate monoesters to free hydroxyl groups of various organic compounds. This is Class B acid phosphatase from Marinomonas sp. (strain MWYL1).